Here is a 471-residue protein sequence, read N- to C-terminus: Vanillate/3-O-methylgallate O-demethylase (471 aa).

Y31 is a binding site for substrate. Residue Q57 participates in (6S)-5,6,7,8-tetrahydrofolate binding. Substrate is bound at residue H60. (6S)-5,6,7,8-tetrahydrofolate-binding residues include Q93 and V120. R122 provides a ligand contact to substrate. Q165 and E215 together coordinate (6S)-5,6,7,8-tetrahydrofolate. Substrate is bound at residue 247 to 250 (YPSN). W256 serves as a coordination point for (6S)-5,6,7,8-tetrahydrofolate.

This sequence belongs to the GcvT family. As to quaternary structure, homodimer.

It catalyses the reaction vanillate + (6S)-5,6,7,8-tetrahydrofolate = (6S)-5-methyl-5,6,7,8-tetrahydrofolate + 3,4-dihydroxybenzoate. The catalysed reaction is 3-O-methylgallate + (6S)-5,6,7,8-tetrahydrofolate = 3,4,5-trihydroxybenzoate + (6S)-5-methyl-5,6,7,8-tetrahydrofolate. It participates in secondary metabolite metabolism; lignin degradation. Functionally, involved in the catabolism of vanillate and syringate. Catalyzes the transfer of a methyl moiety from vanillate or 3-O-methylgallate (3MGA) to tetrahydrofolate, forming protocatechuate (PCA) or gallate, respectively, and methyl-tetrahydrofolate. Has similar activities with both substrates. Cannot use syringate. Uses an ordered, sequential kinetic mechanism. This Sphingobium sp. (strain NBRC 103272 / SYK-6) protein is Vanillate/3-O-methylgallate O-demethylase.